The following is a 341-amino-acid chain: Alpha-ketoglutarate-dependent dioxygenase oryG (341 aa).

Histidine 100 is a substrate binding site. The Fe cation site is built by histidine 140 and aspartate 142. Residue threonine 167 participates in 2-oxoglutarate binding. Histidine 299 contacts Fe cation. The 2-oxoglutarate site is built by arginine 311 and arginine 315. Arginine 315 is a binding site for substrate.

Belongs to the TfdA dioxygenase family. Requires Fe(2+) as cofactor.

The protein operates within secondary metabolite biosynthesis. Its function is as follows. Alpha-ketoglutarate-dependent dioxygenase; part of the gene cluster that mediates the biosynthesis of oryzines, natural products with an unusual maleidride backbone. The two subunits of the fungal fatty acid synthase oryfasA and oryfasB probably form octenoic acid. This fatty acid is most likely activated by the acyl-CoA ligase oryP to give octenyl-CoA before the citrate synthase-like protein oryE catalyzes condensation with oxaloacetate to form tricarboxylic acid. The next steps of the pathways are conjectural, but a favorite possible route has been proposed, beginning with decarboxylation and concomitant dehydration by the decarboxylase oryM, followed by tautomerization, which may lead to the production of a diene intermediate. Reduction of this diene intermediate could give the known metabolite piliformic acid. On the pathway to oryzine B and oryzine A, however, hydroxylation of the diene by the alpha-ketoglutarate-dependent dioxygenase oryG and lactonisation by the lactonohydrolases oryH or oryL could give oryzine B directly. Finally, enoyl reduction by the dehydrogenase oryD would then convert oryzine B into oryzine A. The chain is Alpha-ketoglutarate-dependent dioxygenase oryG from Aspergillus oryzae (strain ATCC 42149 / RIB 40) (Yellow koji mold).